Here is a 472-residue protein sequence, read N- to C-terminus: Serine/threonine-protein kinase ULK3 (472 aa).

Positions 14–270 (FILTERLGSG…FQDFFAHPWV (257 aa)) constitute a Protein kinase domain. Residues 20–28 (LGSGTYATV) and K44 contribute to the ATP site. D137 serves as the catalytic Proton acceptor. S176 bears the Phosphoserine mark. Residues 280–348 (SLGRATALVV…SRAEELKAIV (69 aa)) form the MIT 1 domain. Phosphoserine; by autocatalysis occurs at positions 300, 350, 384, and 464. In terms of domain architecture, MIT 2 spans 375–444 (RLLAALEVAS…ARAEYLKEQV (70 aa)).

The protein belongs to the protein kinase superfamily. Ser/Thr protein kinase family. APG1/unc-51/ULK1 subfamily. As to quaternary structure, interacts (via protein kinase domain) with SUFU. Post-translationally, autophosphorylated. Autophosphorylation is blocked by interaction with SUFU. In terms of tissue distribution, widely expressed. Highest levels observed in fetal brain. In adult tissues, high levels in brain, liver and kidney, moderate levels in testis and adrenal gland and low levels in heart, lung, stomach, thymus, prostate and placenta. In the brain, highest expression in the hippocampus, high levels also detected in the cerebellum, olfactory bulb and optic nerve. In the central nervous system, lowest levels in the spinal cord.

Its subcellular location is the cytoplasm. The enzyme catalyses L-seryl-[protein] + ATP = O-phospho-L-seryl-[protein] + ADP + H(+). It catalyses the reaction L-threonyl-[protein] + ATP = O-phospho-L-threonyl-[protein] + ADP + H(+). Functionally, serine/threonine protein kinase that acts as a regulator of Sonic hedgehog (SHH) signaling and autophagy. Acts as a negative regulator of SHH signaling in the absence of SHH ligand: interacts with SUFU, thereby inactivating the protein kinase activity and preventing phosphorylation of GLI proteins (GLI1, GLI2 and/or GLI3). Positively regulates SHH signaling in the presence of SHH: dissociates from SUFU, autophosphorylates and mediates phosphorylation of GLI2, activating it and promoting its nuclear translocation. Phosphorylates in vitro GLI2, as well as GLI1 and GLI3, although less efficiently. Also acts as a regulator of autophagy: following cellular senescence, able to induce autophagy. In Homo sapiens (Human), this protein is Serine/threonine-protein kinase ULK3 (ULK3).